Consider the following 164-residue polypeptide: 2-C-methyl-D-erythritol 2,4-cyclodiphosphate synthase (164 aa).

Aspartate 9 and histidine 11 together coordinate a divalent metal cation. 4-CDP-2-C-methyl-D-erythritol 2-phosphate is bound by residues 9–11 and 36–37; these read DAH and HS. Histidine 44 lines the a divalent metal cation pocket. 4-CDP-2-C-methyl-D-erythritol 2-phosphate contacts are provided by residues 58 to 60, 63 to 67, 134 to 137, phenylalanine 141, and arginine 144; these read DLG, FPDSD, and TTTE.

This sequence belongs to the IspF family. Homotrimer. The cofactor is a divalent metal cation.

It carries out the reaction 4-CDP-2-C-methyl-D-erythritol 2-phosphate = 2-C-methyl-D-erythritol 2,4-cyclic diphosphate + CMP. It functions in the pathway isoprenoid biosynthesis; isopentenyl diphosphate biosynthesis via DXP pathway; isopentenyl diphosphate from 1-deoxy-D-xylulose 5-phosphate: step 4/6. Its function is as follows. Involved in the biosynthesis of isopentenyl diphosphate (IPP) and dimethylallyl diphosphate (DMAPP), two major building blocks of isoprenoid compounds. Catalyzes the conversion of 4-diphosphocytidyl-2-C-methyl-D-erythritol 2-phosphate (CDP-ME2P) to 2-C-methyl-D-erythritol 2,4-cyclodiphosphate (ME-CPP) with a corresponding release of cytidine 5-monophosphate (CMP). This is 2-C-methyl-D-erythritol 2,4-cyclodiphosphate synthase from Alkalilimnicola ehrlichii (strain ATCC BAA-1101 / DSM 17681 / MLHE-1).